Here is a 146-residue protein sequence, read N- to C-terminus: Protein STIG1 (146 aa).

The signal sequence occupies residues methionine 1 to serine 23. N-linked (GlcNAc...) asparagine glycosylation is found at asparagine 31, asparagine 61, and asparagine 84.

It belongs to the STIG1 family. In terms of processing, glycosylated. In terms of tissue distribution, expressed exclusively in the stigmatic secretory zone.

Its subcellular location is the secreted. Functionally, involved in the temporal regulation of the exudate secretion onto the stigma. In Nicotiana tabacum (Common tobacco), this protein is Protein STIG1.